The primary structure comprises 352 residues: Selenide, water dikinase (352 aa).

The active site involves Cys23. ATP contacts are provided by residues Lys26 and 54 to 56 (SRD). A Mg(2+)-binding site is contributed by Asp57. ATP contacts are provided by residues Asp74, Asp97, and 145 to 147 (GHS). Mg(2+) is bound at residue Asp97. Asp233 provides a ligand contact to Mg(2+).

This sequence belongs to the selenophosphate synthase 1 family. Class I subfamily. As to quaternary structure, homodimer. Requires Mg(2+) as cofactor.

It carries out the reaction hydrogenselenide + ATP + H2O = selenophosphate + AMP + phosphate + 2 H(+). Synthesizes selenophosphate from selenide and ATP. This is Selenide, water dikinase from Shewanella baltica (strain OS155 / ATCC BAA-1091).